A 678-amino-acid chain; its full sequence is Protein MALE DISCOVERER 2 (678 aa).

The N-terminal stretch at 1-25 (MMGCGFHFPWFFFLIIGLQAPLSLS) is a signal peptide. Over 26–323 (LTSQGSALLK…SKGSKHVWLY (298 aa)) the chain is Extracellular. N-linked (GlcNAc...) asparagine glycosylation occurs at Asn52. LRR repeat units follow at residues 71–94 (KVQILDLSGYSLEGTLAPELSQLS), 95–117 (DLRSLILSRNHFSGGIPKEYGSF), 119–141 (NLEVLDLRENDLSGQIPPELSNG), and 143–164 (SLKHLLLSGNKFSDDMRIKIVR). Positions 247–314 (LAAEPAPSAP…KNQPQDNKQS (68 aa)) are disordered. Polar residues predominate over residues 296–311 (KGSTSPDISKNQPQDN). Residues 324–344 (VVIAVASFVGLLIIVAVIFFC) traverse the membrane as a helical segment. Residues 345 to 678 (RKRAVKSIGP…ELEILSSEAT (334 aa)) are Cytoplasmic-facing. The region spanning 346 to 651 (KRAVKSIGPW…DVAEQLKQVI (306 aa)) is the Protein kinase domain.

This sequence belongs to the protein kinase superfamily. Ser/Thr protein kinase family. As to expression, expressed in pollen tubes and seedlings.

It is found in the endomembrane system. It catalyses the reaction L-seryl-[protein] + ATP = O-phospho-L-seryl-[protein] + ADP + H(+). It carries out the reaction L-threonyl-[protein] + ATP = O-phospho-L-threonyl-[protein] + ADP + H(+). Its function is as follows. Involved in the pollen tube perception of the female signal by binding an unidentified female attractant. May be involved in the regulation of root hairs development. The polypeptide is Protein MALE DISCOVERER 2 (MDIS2) (Arabidopsis thaliana (Mouse-ear cress)).